A 171-amino-acid chain; its full sequence is ATP synthase subunit b (171 aa).

The chain crosses the membrane as a helical span at residues 2–22; that stretch reads FVVKMVLGFLILLSPLCATGL.

The protein belongs to the ATPase B chain family. F-type ATPases have 2 components, F(1) - the catalytic core - and F(0) - the membrane proton channel. F(1) has five subunits: alpha(3), beta(3), gamma(1), delta(1), epsilon(1). F(0) has three main subunits: a(1), b(2) and c(10-14). The alpha and beta chains form an alternating ring which encloses part of the gamma chain. F(1) is attached to F(0) by a central stalk formed by the gamma and epsilon chains, while a peripheral stalk is formed by the delta and b chains.

It localises to the cell inner membrane. F(1)F(0) ATP synthase produces ATP from ADP in the presence of a proton or sodium gradient. F-type ATPases consist of two structural domains, F(1) containing the extramembraneous catalytic core and F(0) containing the membrane proton channel, linked together by a central stalk and a peripheral stalk. During catalysis, ATP synthesis in the catalytic domain of F(1) is coupled via a rotary mechanism of the central stalk subunits to proton translocation. In terms of biological role, component of the F(0) channel, it forms part of the peripheral stalk, linking F(1) to F(0). The sequence is that of ATP synthase subunit b from Helicobacter pylori (strain G27).